Reading from the N-terminus, the 143-residue chain is Hemoglobin subunit alpha-1 (143 aa).

Position 2 is an N-acetylserine (Ser2). The Globin domain maps to 2–143; sequence SLSSKDKATV…RALALAEKYR (142 aa). His60 lines the O2 pocket. His89 lines the heme b pocket.

The protein belongs to the globin family. Hb 1 is a heterotetramer of two alpha-1 and two beta-1 chains. Hb 3 is a heterotetramer of two alpha-1 and two beta-2 chains. In terms of tissue distribution, red blood cells.

Its function is as follows. Involved in oxygen transport from gills to the various peripheral tissues. This Gadus morhua (Atlantic cod) protein is Hemoglobin subunit alpha-1 (hba1).